The sequence spans 425 residues: Polyribonucleotide 5'-hydroxyl-kinase Clp1 (425 aa).

ATP contacts are provided by residues glutamate 22, lysine 62, and 124-129; that span reads DVGKST.

It belongs to the Clp1 family. Clp1 subfamily. In terms of assembly, component of the tRNA splicing endonuclease complex, composed of CLP1, TSEN2, TSEN15, TSEN34 and TSEN54. Component of pre-mRNA cleavage complex II (CF-II). Also associates with numerous components of the pre-mRNA cleavage complex I (CF-I/CFIm), including NUDT21, CPSF2, CPSF3, CPSF6 and CPSF7. Interacts with CSTF2 and SYMPK. Mg(2+) is required as a cofactor. Mn(2+) serves as cofactor. Requires Ni(2+) as cofactor.

The protein localises to the nucleus. The enzyme catalyses a 5'-end dephospho-2'-deoxyribonucleoside-DNA + ATP = a 5'-end 5'-phospho-2'-deoxyribonucleoside-DNA + ADP + H(+). It carries out the reaction a 5'-end dephospho-ribonucleoside-RNA + ATP = a 5'-end 5'-phospho-ribonucleoside-RNA + ADP + H(+). Polynucleotide kinase that can phosphorylate the 5'-hydroxyl groups of double-stranded RNA (dsRNA), single-stranded RNA (ssRNA), double-stranded DNA (dsDNA) and double-stranded DNA:RNA hybrids. dsRNA is phosphorylated more efficiently than dsDNA, and the RNA component of a DNA:RNA hybrid is phosphorylated more efficiently than the DNA component. Plays a key role in both tRNA splicing and mRNA 3'-end formation. Component of the tRNA splicing endonuclease complex: phosphorylates the 5'-terminus of the tRNA 3'-exon during tRNA splicing; this phosphorylation event is a prerequisite for the subsequent ligation of the two exon halves and the production of a mature tRNA. Its role in tRNA splicing and maturation is required for cerebellar development. Component of the pre-mRNA cleavage complex II (CF-II), which seems to be required for mRNA 3'-end formation. Also phosphorylates the 5'-terminus of exogenously introduced short interfering RNAs (siRNAs), which is a necessary prerequisite for their incorporation into the RNA-induced silencing complex (RISC). However, endogenous siRNAs and microRNAs (miRNAs) that are produced by the cleavage of dsRNA precursors by DICER1 already contain a 5'-phosphate group, so this protein may be dispensible for normal RNA-mediated gene silencing. This Bos taurus (Bovine) protein is Polyribonucleotide 5'-hydroxyl-kinase Clp1.